The following is a 151-amino-acid chain: Ribosomal RNA large subunit methyltransferase H (151 aa).

S-adenosyl-L-methionine contacts are provided by residues Leu73, Gly100, and Leu119 to Met124.

The protein belongs to the RNA methyltransferase RlmH family. As to quaternary structure, homodimer.

Its subcellular location is the cytoplasm. The enzyme catalyses pseudouridine(1915) in 23S rRNA + S-adenosyl-L-methionine = N(3)-methylpseudouridine(1915) in 23S rRNA + S-adenosyl-L-homocysteine + H(+). Functionally, specifically methylates the pseudouridine at position 1915 (m3Psi1915) in 23S rRNA. The protein is Ribosomal RNA large subunit methyltransferase H of Aliarcobacter butzleri (strain RM4018) (Arcobacter butzleri).